A 239-amino-acid polypeptide reads, in one-letter code: Large ribosomal subunit protein uL1 (239 aa).

Belongs to the universal ribosomal protein uL1 family. As to quaternary structure, part of the 50S ribosomal subunit.

Its function is as follows. Binds directly to 23S rRNA. The L1 stalk is quite mobile in the ribosome, and is involved in E site tRNA release. Functionally, protein L1 is also a translational repressor protein, it controls the translation of the L11 operon by binding to its mRNA. This Rickettsia canadensis (strain McKiel) protein is Large ribosomal subunit protein uL1.